A 133-amino-acid chain; its full sequence is MLHMHIASWALTIILYVIAFLHISKSQGPTPMFKPLQMALRVFMLLTLFSGFWLLIQEFMAASHGGGGNHMLLTLKMLCGIAVVALMEVSIAKRKKHEASHGLFWATIILIIITMSLGIILPWGPISSLFGIS.

4 helical membrane-spanning segments follow: residues 1–21, 42–62, 71–91, and 103–123; these read MLHM…IAFL, VFML…FMAA, MLLT…EVSI, and LFWA…ILPW.

This sequence belongs to the UPF0344 family.

The protein resides in the cell membrane. The polypeptide is UPF0344 protein SH1980 (Staphylococcus haemolyticus (strain JCSC1435)).